The primary structure comprises 454 residues: Serine/arginine (SR)-type shuttling mRNA binding protein HRB1 (454 aa).

Residues Met1–Pro141 form a disordered region. The segment covering Ser14–Arg24 has biased composition (basic residues). Basic and acidic residues-rich tracts occupy residues Arg25 to Leu38 and Lys50 to Arg113. Omega-N-methylarginine is present on Arg127. 2 consecutive RRM domains span residues Asn161–Pro237 and His261–Ser338. Phosphoserine is present on residues Ser338, Ser343, and Ser355. An RRM 3 domain is found at Arg376–Arg453.

Post-translationally, methylated by HMT1.

The protein localises to the cytoplasm. It localises to the nucleus. Its subcellular location is the P-body. It is found in the stress granule. Functionally, binds to intron-containing transcripts and is involved in quality control for the export of spliced mRNAs from the nucleus. Binds to pre-mRNAs until splicing is completed or until faulty mRNAs are degraded. On correctly spliced mRNAs, GBP2 and HRB1 recruit MEX67 to allow nuclear export. On faulty mRNAs, GBP2 and HRB1 associate with the TRAMP complex that guides those pre-mRNAs to the exosome for degradation. The protein is Serine/arginine (SR)-type shuttling mRNA binding protein HRB1 of Saccharomyces cerevisiae (strain ATCC 204508 / S288c) (Baker's yeast).